The chain runs to 283 residues: BTB/POZ domain-containing protein KCTD15 (283 aa).

The disordered stretch occupies residues 1–32; the sequence is MPHRKERPSGSSLHTHGSTGTAEGGNMSRLSL. The segment covering 9-21 has biased composition (low complexity); it reads SGSSLHTHGSTGT. Residues S31, S35, and S38 each carry the phosphoserine modification. Residues 56–126 form the BTB domain; that stretch reads APVHIDVGGH…LRTSKLLLPD (71 aa).

Forms oligomers, predominantly homopentamers. Interacts with KCTD1, probably forming heteropentamers depending on its abundance in a cell-type dependent manner. Interacts with TFAP2A; this interaction inhibits TFAP2A transcriptional activation.

The protein localises to the nucleus. Functionally, during embryonic development, it is involved in neural crest formation. Inhibits AP2 transcriptional activity by interaction with its activation domain. The protein is BTB/POZ domain-containing protein KCTD15 (KCTD15) of Homo sapiens (Human).